The sequence spans 499 residues: L-arabinose isomerase (499 aa).

The Mn(2+) site is built by Glu306, Glu333, His350, and His449.

Belongs to the arabinose isomerase family. Mn(2+) serves as cofactor.

The enzyme catalyses beta-L-arabinopyranose = L-ribulose. It participates in carbohydrate degradation; L-arabinose degradation via L-ribulose; D-xylulose 5-phosphate from L-arabinose (bacterial route): step 1/3. In terms of biological role, catalyzes the conversion of L-arabinose to L-ribulose. The sequence is that of L-arabinose isomerase from Aeromonas hydrophila subsp. hydrophila (strain ATCC 7966 / DSM 30187 / BCRC 13018 / CCUG 14551 / JCM 1027 / KCTC 2358 / NCIMB 9240 / NCTC 8049).